The chain runs to 458 residues: Acetyl-CoA decarbonylase/synthase complex subunit gamma (458 aa).

In terms of domain architecture, 4Fe-4S spans 1 to 59 (MQVTAMDVYRLLPKTNCGKCNEASCMAFATKLIEKEVTLDDCPQLSGDERQKLENLLAP). C17, C20, C25, and C42 together coordinate [4Fe-4S] cluster.

Heterodimer of delta and gamma chains. The ACDS complex is made up of alpha, epsilon, beta, gamma and delta chains with a probable stoichiometry of (alpha(2)epsilon(2))(4)-beta(8)-(gamma(1)delta(1))(8). Requires corrinoid as cofactor. [4Fe-4S] cluster serves as cofactor.

The enzyme catalyses 5,6,7,8-tetrahydrosarcinapterin + methyl-Co(III)-[corrinoid Fe-S protein] = 5-methyltetrahydrosarcinapterin + Co(I)-[corrinoid Fe-S protein] + H(+). Part of a complex that catalyzes the reversible cleavage of acetyl-CoA, allowing autotrophic growth from CO(2). This chain is Acetyl-CoA decarbonylase/synthase complex subunit gamma, found in Methanothermobacter thermautotrophicus (strain ATCC 29096 / DSM 1053 / JCM 10044 / NBRC 100330 / Delta H) (Methanobacterium thermoautotrophicum).